Reading from the N-terminus, the 240-residue chain is MQAKIKNKRVLVKFSGEALAGDNQFGIDIHVLDHIAKEIKSLVENDIEVGIVIGGGNIIRGVSAAQGGIIRRTSGDYMGMLATVINAVAMQEALEHIGLDTRVQSAIEIKEICESYIYRKAIRHLEKGRVVIFGAGTGNPFFTTDTAATLRAIEIGSDLIIKATKVDGIYDKDPNKFKDAKKLDTLSYNDALIGDIEVMDDTAISLAKDNKLPIVVCNMFKKGNLLQVIKHQQGVFSMVK.

13-16 is a binding site for ATP; that stretch reads KFSG. Gly55 contributes to the UMP binding site. Residues Gly56 and Arg60 each contribute to the ATP site. UMP is bound by residues Asp76 and 137-144; that span reads TGNPFFTT. ATP is bound by residues Thr164, Tyr170, and Asp173.

It belongs to the UMP kinase family. As to quaternary structure, homohexamer.

It localises to the cytoplasm. It carries out the reaction UMP + ATP = UDP + ADP. It participates in pyrimidine metabolism; CTP biosynthesis via de novo pathway; UDP from UMP (UMPK route): step 1/1. With respect to regulation, inhibited by UTP. In terms of biological role, catalyzes the reversible phosphorylation of UMP to UDP. The sequence is that of Uridylate kinase from Helicobacter pylori (strain ATCC 700392 / 26695) (Campylobacter pylori).